The following is a 250-amino-acid chain: tRNA (guanine-N(7)-)-methyltransferase (250 aa).

4 residues coordinate S-adenosyl-L-methionine: glutamate 86, glutamate 111, aspartate 138, and aspartate 161. Residue aspartate 161 is part of the active site. Substrate-binding positions include lysine 165, aspartate 197, and 229–232 (TEFE).

It belongs to the class I-like SAM-binding methyltransferase superfamily. TrmB family.

The enzyme catalyses guanosine(46) in tRNA + S-adenosyl-L-methionine = N(7)-methylguanosine(46) in tRNA + S-adenosyl-L-homocysteine. Its pathway is tRNA modification; N(7)-methylguanine-tRNA biosynthesis. Functionally, catalyzes the formation of N(7)-methylguanine at position 46 (m7G46) in tRNA. The sequence is that of tRNA (guanine-N(7)-)-methyltransferase from Treponema pallidum (strain Nichols).